Reading from the N-terminus, the 532-residue chain is Zinc finger protein 350 (532 aa).

A KRAB domain is found at 8–79 (ITLEDVAVDF…EDGIHSGACS (72 aa)). 8 consecutive C2H2-type zinc fingers follow at residues 206–228 (HVCSECGKAFIKKSWLTDHQVMH), 234–256 (HRCSLCEKAFSRKFMLTEHQRTH), 262–284 (YECPECGKAFLKKSRLNIHQKTH), 290–312 (YICSECGKGFIQKGNLIVHQRIH), 318–340 (YICNECGKGFIQKTCLIAHQRFH), 346–368 (FVCSECGKSCSQKSGLIKHQRIH), 374–396 (FECSECGKAFSTKQKLIVHQRTH), and 402–424 (YGCNECGKAFAYMSCLVKHKRIH). Residues 427–443 (EKQEAAKVENPPAERHS) show a composition bias toward basic and acidic residues. The tract at residues 427–465 (EKQEAAKVENPPAERHSSLHTSDVMQEKNSANGATTQVP) is disordered. Over residues 445–465 (LHTSDVMQEKNSANGATTQVP) the composition is skewed to polar residues.

The protein belongs to the krueppel C2H2-type zinc-finger protein family. As to quaternary structure, interacts with BRCA1. Interacts with RNF11. In terms of tissue distribution, widely expressed.

Its subcellular location is the nucleus. It is found in the nucleus matrix. Its function is as follows. Transcriptional repressor. Binds to a specific sequence, 5'-GGGxxxCAGxxxTTT-3', within GADD45 intron 3. This chain is Zinc finger protein 350 (ZNF350), found in Homo sapiens (Human).